Here is a 460-residue protein sequence, read N- to C-terminus: Serine--tRNA ligase (460 aa).

Basic and acidic residues predominate over residues 43–66 (AEGDGLRQERNEVSSKIGELKQDG). The tract at residues 43 to 81 (AEGDGLRQERNEVSSKIGELKQDGKDEEAQEAIDRSQEL) is disordered. Residue 242-244 (TAE) participates in L-serine binding. ATP is bound by residues 273–275 (RRE) and valine 289. Glutamate 296 is an L-serine binding site. 369–372 (EVSS) serves as a coordination point for ATP. Residue serine 405 participates in L-serine binding.

The protein belongs to the class-II aminoacyl-tRNA synthetase family. Type-1 seryl-tRNA synthetase subfamily. As to quaternary structure, homodimer. The tRNA molecule binds across the dimer.

It localises to the cytoplasm. It catalyses the reaction tRNA(Ser) + L-serine + ATP = L-seryl-tRNA(Ser) + AMP + diphosphate + H(+). The catalysed reaction is tRNA(Sec) + L-serine + ATP = L-seryl-tRNA(Sec) + AMP + diphosphate + H(+). It participates in aminoacyl-tRNA biosynthesis; selenocysteinyl-tRNA(Sec) biosynthesis; L-seryl-tRNA(Sec) from L-serine and tRNA(Sec): step 1/1. Its function is as follows. Catalyzes the attachment of serine to tRNA(Ser). Is also probably able to aminoacylate tRNA(Sec) with serine, to form the misacylated tRNA L-seryl-tRNA(Sec), which will be further converted into selenocysteinyl-tRNA(Sec). In Haloarcula marismortui (strain ATCC 43049 / DSM 3752 / JCM 8966 / VKM B-1809) (Halobacterium marismortui), this protein is Serine--tRNA ligase (serS).